The sequence spans 362 residues: tRNA/tmRNA (uracil-C(5))-methyltransferase (362 aa).

Residues Gln186, Tyr214, Asn219, Glu235, and Asp295 each contribute to the S-adenosyl-L-methionine site. Cys320 (nucleophile) is an active-site residue. Glu354 functions as the Proton acceptor in the catalytic mechanism.

The protein belongs to the class I-like SAM-binding methyltransferase superfamily. RNA M5U methyltransferase family. TrmA subfamily.

It carries out the reaction uridine(54) in tRNA + S-adenosyl-L-methionine = 5-methyluridine(54) in tRNA + S-adenosyl-L-homocysteine + H(+). It catalyses the reaction uridine(341) in tmRNA + S-adenosyl-L-methionine = 5-methyluridine(341) in tmRNA + S-adenosyl-L-homocysteine + H(+). Dual-specificity methyltransferase that catalyzes the formation of 5-methyluridine at position 54 (m5U54) in all tRNAs, and that of position 341 (m5U341) in tmRNA (transfer-mRNA). This chain is tRNA/tmRNA (uracil-C(5))-methyltransferase, found in Ectopseudomonas mendocina (strain ymp) (Pseudomonas mendocina).